The sequence spans 914 residues: Eukaryotic initiation factor 4F subunit p130 (914 aa).

Residues 1-12 (MTDQRGPPPPHP) show a composition bias toward pro residues. Disordered stretches follow at residues 1–84 (MTDQ…YNNR), 128–205 (PPYT…NEAV), 240–351 (ERKK…VNKS), and 457–535 (IARN…LVPS). The segment covering 26–44 (NQYSGANNSQPNNHYNENL) has biased composition (polar residues). Positions 59 to 73 (KNGKYGTNKYNNRNN) are enriched in low complexity. Position 74 is a phosphoserine (serine 74). Residues 145-155 (PKTTKIEITTK) show a composition bias toward low complexity. A compositionally biased stretch (basic and acidic residues) spans 156 to 195 (TGERLNLKKFHEEKKASKGEEKNDGVEQKSKSGTPFEKEA). Threonine 196 is subject to Phosphothreonine. The segment at 201–315 (ANEAVKDTLT…TGSVTKSVTF (115 aa)) is interaction with PAB1. Positions 240–263 (ERKKNGLISETEKKQETSNHDNTD) are enriched in basic and acidic residues. Polar residues-rich tracts occupy residues 298 to 325 (SVKT…SSSQ) and 339 to 348 (ISDTTGGKTV). Position 301 is a phosphothreonine (threonine 301). Basic and acidic residues predominate over residues 496–529 (RMGDDRRSNRGYTSRKDREKAAEKAEEQAPKEEI). Serine 503 carries the post-translational modification Phosphoserine. In terms of domain architecture, MIF4G spans 567-810 (ERKMKSLLNK…IDVKELREIK (244 aa)). The disordered stretch occupies residues 833 to 914 (QLRQKKNSQR…ALMNNDGDSD (82 aa)). The span at 841–867 (QRSNSRFNNHNQSNSNRYSSNRRNMQN) shows a compositional bias: low complexity. Positions 868–886 (TQRDSFASTKTGSFRNNQR) are enriched in polar residues. Serine 913 is modified (phosphoserine).

The protein belongs to the eukaryotic initiation factor 4G family. Component of the eIF4F complex, which composition varies with external and internal environmental conditions. It is composed of at least eIF4A (TIF1/TIF2), eIF4E (TIF45) and eIF4G (TIF4631 or TIF4632). Interacts with PAT1 in a RNA-dependent manner.

It localises to the cytoplasm. Its function is as follows. Component of the eIF4F complex, which interacts with the mRNA cap structure and serves as an initial point of assembly for the translation apparatus. Stimulates translation by interaction with polyadenylate-binding protein PAB1, bringing the 5'- and 3'-ends of the mRNA in proximity. The formation of this circular mRNP structure appears to be critical for the synergistic effects of the cap and the poly(A) tail in facilitating translation initiation, recycling of ribosomes, and mRNA stability. TIF4632 is probably essential when TIF4631 is missing. The sequence is that of Eukaryotic initiation factor 4F subunit p130 from Saccharomyces cerevisiae (strain ATCC 204508 / S288c) (Baker's yeast).